Reading from the N-terminus, the 344-residue chain is tRNA (guanine(26)-N(2))-dimethyltransferase (344 aa).

Positions 1–334 (MIVREGSAEI…ASCDLVESLM (334 aa)) constitute a Trm1 methyltransferase domain. 3 residues coordinate S-adenosyl-L-methionine: arginine 35, arginine 60, and glutamate 76.

It belongs to the class I-like SAM-binding methyltransferase superfamily. Trm1 family.

It catalyses the reaction guanosine(26) in tRNA + 2 S-adenosyl-L-methionine = N(2)-dimethylguanosine(26) in tRNA + 2 S-adenosyl-L-homocysteine + 2 H(+). Functionally, dimethylates a single guanine residue at position 26 of a number of tRNAs using S-adenosyl-L-methionine as donor of the methyl groups. This is tRNA (guanine(26)-N(2))-dimethyltransferase from Thermoplasma acidophilum (strain ATCC 25905 / DSM 1728 / JCM 9062 / NBRC 15155 / AMRC-C165).